The chain runs to 338 residues: tRNA N6-adenosine threonylcarbamoyltransferase (338 aa).

Positions 112 and 116 each coordinate Fe cation. Substrate-binding positions include 135–139, aspartate 168, glycine 181, and asparagine 273; that span reads LVSGG. Fe cation is bound at residue aspartate 301.

Belongs to the KAE1 / TsaD family. Requires Fe(2+) as cofactor.

It localises to the cytoplasm. The enzyme catalyses L-threonylcarbamoyladenylate + adenosine(37) in tRNA = N(6)-L-threonylcarbamoyladenosine(37) in tRNA + AMP + H(+). Its function is as follows. Required for the formation of a threonylcarbamoyl group on adenosine at position 37 (t(6)A37) in tRNAs that read codons beginning with adenine. Is involved in the transfer of the threonylcarbamoyl moiety of threonylcarbamoyl-AMP (TC-AMP) to the N6 group of A37, together with TsaE and TsaB. TsaD likely plays a direct catalytic role in this reaction. The sequence is that of tRNA N6-adenosine threonylcarbamoyltransferase from Buchnera aphidicola subsp. Baizongia pistaciae (strain Bp).